The chain runs to 217 residues: Ras-related protein RABA2a (217 aa).

GTP is bound at residue 19 to 26; it reads GDSGVGKS. Positions 41-49 match the Effector region motif; the sequence is SKSTIGVEF. GTP contacts are provided by residues 67–71, 125–128, and 155–156; these read DTAGQ, NKTD, and SA. Cys213 is lipidated: S-palmitoyl cysteine. Cysteine methyl ester is present on Cys214. Residue Cys214 is the site of S-geranylgeranyl cysteine attachment. A propeptide spans 215–217 (removed in mature form); it reads SSS.

It belongs to the small GTPase superfamily. Rab family. In terms of tissue distribution, expressed in root tips.

It localises to the endosome membrane. The protein localises to the golgi apparatus. Its subcellular location is the trans-Golgi network membrane. Intracellular vesicle trafficking and protein transport. This is Ras-related protein RABA2a (RABA2A) from Arabidopsis thaliana (Mouse-ear cress).